An 871-amino-acid polypeptide reads, in one-letter code: Leucine--tRNA ligase (871 aa).

The short motif at 43-53 is the 'HIGH' region element; sequence PYPSGRIHIGH. The 'KMSKS' region motif lies at 629–633; it reads KMSKS. Position 632 (K632) interacts with ATP.

Belongs to the class-I aminoacyl-tRNA synthetase family.

The protein resides in the cytoplasm. It catalyses the reaction tRNA(Leu) + L-leucine + ATP = L-leucyl-tRNA(Leu) + AMP + diphosphate. The sequence is that of Leucine--tRNA ligase from Chelativorans sp. (strain BNC1).